The following is a 133-amino-acid chain: MIIGIGVDIIEIGRVRQAIRNNKNFLSKLFTEREIDYFISRNMNSEVIAGNFAAKEAVSKALGTGMRGFSFKDIEILRNELGKPEVILHNGANLIGNKLVENNNSLRVHLSISHNNSSAIAYSVLEGEYYGNI.

Residues Asp8 and Glu56 each coordinate Mg(2+).

It belongs to the P-Pant transferase superfamily. AcpS family. Mg(2+) serves as cofactor.

Its subcellular location is the cytoplasm. It carries out the reaction apo-[ACP] + CoA = holo-[ACP] + adenosine 3',5'-bisphosphate + H(+). Transfers the 4'-phosphopantetheine moiety from coenzyme A to a Ser of acyl-carrier-protein. This Clostridium perfringens (strain SM101 / Type A) protein is Holo-[acyl-carrier-protein] synthase.